The chain runs to 485 residues: Glutamate--tRNA ligase (485 aa).

The 'HIGH' region motif lies at 11–21 (PSPTGHLHIGN). The 'KMSKS' region motif lies at 252–256 (KLSKR). Position 255 (Lys-255) interacts with ATP.

It belongs to the class-I aminoacyl-tRNA synthetase family. Glutamate--tRNA ligase type 1 subfamily. In terms of assembly, monomer.

It localises to the cytoplasm. It catalyses the reaction tRNA(Glu) + L-glutamate + ATP = L-glutamyl-tRNA(Glu) + AMP + diphosphate. Catalyzes the attachment of glutamate to tRNA(Glu) in a two-step reaction: glutamate is first activated by ATP to form Glu-AMP and then transferred to the acceptor end of tRNA(Glu). This chain is Glutamate--tRNA ligase, found in Bacillus cereus (strain ATCC 14579 / DSM 31 / CCUG 7414 / JCM 2152 / NBRC 15305 / NCIMB 9373 / NCTC 2599 / NRRL B-3711).